We begin with the raw amino-acid sequence, 473 residues long: Dol-P-Glc:Glc(2)Man(9)GlcNAc(2)-PP-Dol alpha-1,2-glucosyltransferase (473 aa).

The Cytoplasmic portion of the chain corresponds to Met1–Gly6. The chain crosses the membrane as a helical span at residues Tyr7–Phe27. At Ser28–Thr64 the chain is on the extracellular side. Residues Leu65–Trp85 traverse the membrane as a helical segment. Topologically, residues Ser86–Arg97 are cytoplasmic. A helical transmembrane segment spans residues Phe98–Val118. Residues Gln119–Ser126 are Extracellular-facing. Residues Ser127 to Asn147 traverse the membrane as a helical segment. The Cytoplasmic portion of the chain corresponds to Phe148–Tyr150. The chain crosses the membrane as a helical span at residues Tyr151–Asn171. At His172–Ser175 the chain is on the extracellular side. Residues Ala176–Cys196 form a helical membrane-spanning segment. Residues Ala197–Pro256 lie on the Cytoplasmic side of the membrane. The chain crosses the membrane as a helical span at residues Tyr257–Gly277. Residues Asp278 to Glu283 lie on the Extracellular side of the membrane. A helical membrane pass occupies residues Ala284–Pro304. Over His305–Ser317 the chain is Cytoplasmic. A helical membrane pass occupies residues Leu318–Trp338. The Extracellular segment spans residues Lys339 to Arg365. A helical membrane pass occupies residues Tyr366–Asp386. The Cytoplasmic segment spans residues Ser387–Pro392. The helical transmembrane segment at Ile393–Leu413 threads the bilayer. At Glu414–Arg436 the chain is on the extracellular side. Residues Leu437–Asn457 traverse the membrane as a helical segment. Over Lys458–Trp473 the chain is Cytoplasmic.

The protein belongs to the ALG10 glucosyltransferase family. As to quaternary structure, interacts with KCNH1; may regulate KCNH1, possibly by regulating its N-glycosylation. Interacts with KCNH2; may reduce KCNH2 sensitivity to classic proarrhythmic drug blockade, possibly by regulating its N-glycosylation. Highly expressed in heart, placenta, liver, kidney and pancreas. Weakly expressed in lung, skeletal muscle and brain.

It localises to the endoplasmic reticulum membrane. The enzyme catalyses an alpha-D-Glc-(1-&gt;3)-alpha-D-Glc-(1-&gt;3)-alpha-D-Man-(1-&gt;2)-alpha-D-Man-(1-&gt;2)-alpha-D-Man-(1-&gt;3)-[alpha-D-Man-(1-&gt;2)-alpha-D-Man-(1-&gt;3)-[alpha-D-Man-(1-&gt;2)-alpha-D-Man-(1-&gt;6)]-alpha-D-Man-(1-&gt;6)]-beta-D-Man-(1-&gt;4)-beta-D-GlcNAc-(1-&gt;4)-alpha-D-GlcNAc-diphospho-di-trans,poly-cis-dolichol + a di-trans,poly-cis-dolichyl beta-D-glucosyl phosphate = a alpha-D-Glc-(1-&gt;2)-alpha-D-Glc-(1-&gt;3)-alpha-D-Glc-(1-&gt;3)-alpha-D-Man-(1-&gt;2)-alpha-D-Man-(1-&gt;2)-alpha-D-Man-(1-&gt;3)-[alpha-D-Man-(1-&gt;2)-alpha-D-Man-(1-&gt;3)-[alpha-D-Man-(1-&gt;2)-alpha-D-Man-(1-&gt;6)]-alpha-D-Man-(1-&gt;6)]-beta-D-Man-(1-&gt;4)-beta-D-GlcNAc-(1-&gt;4)-alpha-D-GlcNAc-diphospho-di-trans,poly-cis-dolichol + a di-trans,poly-cis-dolichyl phosphate + H(+). The protein operates within protein modification; protein glycosylation. Its function is as follows. Dol-P-Glc:Glc(2)Man(9)GlcNAc(2)-PP-Dol alpha-1,2-glucosyltransferase that operates in the biosynthetic pathway of dolichol-linked oligosaccharides, the glycan precursors employed in protein asparagine (N)-glycosylation. The assembly of dolichol-linked oligosaccharides begins on the cytosolic side of the endoplasmic reticulum membrane and finishes in its lumen. The sequential addition of sugars to dolichol pyrophosphate produces dolichol-linked oligosaccharides containing fourteen sugars, including two GlcNAcs, nine mannoses and three glucoses. Once assembled, the oligosaccharide is transferred from the lipid to nascent proteins by oligosaccharyltransferases. In the lumen of the endoplasmic reticulum, adds the third and last glucose residue from dolichyl phosphate glucose (Dol-P-Glc) onto the lipid-linked oligosaccharide intermediate Glc(2)Man(9)GlcNAc(2)-PP-Dol to produce Glc(3)Man(9)GlcNAc(2)-PP-Dol. This Homo sapiens (Human) protein is Dol-P-Glc:Glc(2)Man(9)GlcNAc(2)-PP-Dol alpha-1,2-glucosyltransferase.